Reading from the N-terminus, the 626-residue chain is E3 ubiquitin-protein ligase HRD1 (626 aa).

An N-terminal signal peptide occupies residues Met1 to Ala15. Residues Val16–Asn38 lie on the Lumenal side of the membrane. The chain crosses the membrane as a helical span at residues Ala39–Leu59. Residues Ser60–Asp96 lie on the Cytoplasmic side of the membrane. The helical transmembrane segment at Phe97 to Leu117 threads the bilayer. Over Ala118 to Ser128 the chain is Lumenal. Residues Pro129 to Leu149 form a helical membrane-spanning segment. The Cytoplasmic segment spans residues Asp150–Thr167. Residues Val168 to Ile188 traverse the membrane as a helical segment. Topologically, residues Lys189–Val222 are lumenal. Residues Val223 to Phe243 form a helical membrane-spanning segment. The segment at Lys234–Arg268 is interaction with p53/TP53. Over Arg244–Glu626 the chain is Cytoplasmic. Residues Cys289 to Arg328 form an RING-type; atypical zinc finger. Residues Asp569–Gly600 are disordered. A compositionally biased stretch (polar residues) spans Ser577–Asn587.

This sequence belongs to the HRD1 family. In terms of assembly, homodimer. Interacts with p53. May interact with Septin2.

It is found in the endoplasmic reticulum membrane. The enzyme catalyses S-ubiquitinyl-[E2 ubiquitin-conjugating enzyme]-L-cysteine + [acceptor protein]-L-lysine = [E2 ubiquitin-conjugating enzyme]-L-cysteine + N(6)-ubiquitinyl-[acceptor protein]-L-lysine.. The protein operates within protein modification; protein ubiquitination. Acts as an E3 ubiquitin-protein ligase which accepts ubiquitin specifically from endoplasmic reticulum-associated UBC7 E2 ligase and transfers it to substrates, promoting their degradation. Component of the endoplasmic reticulum quality control (ERQC) system also called ER-associated degradation (ERAD) involved in ubiquitin-dependent degradation of misfolded endoplasmic reticulum proteins. Also promotes the degradation of normal but naturally short-lived proteins. Protects cells from ER stress-induced apoptosis. Sequesters p53 in the cytoplasm and promotes its degradation, thereby negatively regulating its biological function in transcription, cell cycle regulation and apoptosis. The sequence is that of E3 ubiquitin-protein ligase HRD1 (sip3) from Drosophila melanogaster (Fruit fly).